The following is a 1079-amino-acid chain: MSGRAVLSPQHAQASFDSGLQLYGDVPELNAVPPPSHSALMDFTRFDDFAFAYYGLPDQSSLVSLVDHTHTFQSLTTFPQHQAISGLAHSGLPFGTLPTDNYNQSMEDSKAPPDRTSPASNALEDPTTDEFGLASPNRAGGTDLGGKPKEDKADATPAWSELKTKAGKERKRLPLACIACRRKKIRCSGEKPACKQCLHSCIPCVYKVATRKAAPRTNCMAMLDKRPKRMEERAIKAISKSDQEVASSVTHPVVKQAIPGTVTSSRPTKKRGAEEAFEPDLEAWAKASSEPKIEGDDGSSSLQVQEGEENKLQHEGTEALPSREIQEHLAEVFFENIYGQSYHLLHKPSYMRKLKNGTLPPVLVLTVCAVAARFTSNPLVSSSGPEFLRGEEWASHARDICTRRYEWPNLTILTCLLILGLHEFGTCQGGRSWALGGQAIRMAFALQLHKDLEYDPSGRNGTTTQLSFIDREIRRRIMWACFLMDRFNSSGTDRPMFIREDTIQIPLPVKEKYFQFDMPAPTEMLDGRVPHPPSPNDGQIANSRENMGVAAFLIRAIALWGRIITYLSQGCKDLDPNPLWEDESHYMKHLDDVVNLEASLPLSLKHSAENLEVHKTENTASQFLFMHICLQHNILFVNRAAMSARKQHGVHDDFVSEASKRAFNAANRISELLREAEQSGCFVSAPFAGYCAFSSTTVHILGIISRNPFTKLAAQANLTTNIKYLHRMKKYWGMFHWMVENVRTQYRNVLDAMRAGANVEERATQPSFLQYGDWFNRYPRGLSDAEFMDPATHKRKDSGADGVLEAKRELRSVEEYFTLPTPRRVENKDTIRATAPKRKQSAKKQAGMPAQPGQHLDSLQSIDADAVSQERKFSGGLGLQITGAAGFNPLAASNQQSPDFSTTISPTRPANMTPFAHHAHTPTFFPPELLAMNFGQGSNGNIDPLDRQLIYGGYSMDASTGLGGGQDMMSGLGWDTVALGAQPDGRLQSRPSNAKAGMHGQSAGMADGAGLSRPEASSAWFMPFNMEPPDMDQDAGFNMGGIDPFTGVFGGGGSGLATPNALGGLILGHCRGSSTHSTR.

A DNA-binding region (zn(2)-C6 fungal-type) is located at residues 177-204; it reads CIACRRKKIRCSGEKPACKQCLHSCIPC.

The protein localises to the nucleus. Zn(2)-C6 fungal-type transcription factor that has a role in the establishment of the fungus within the plant and/or the progress of the disease. Regulates the expression of virulence factors such as SIX1 and SIX6. The chain is Zn(2)-C6 fungal-type transcription factor FTF1a from Fusarium oxysporum f. sp. lycopersici (strain 4287 / CBS 123668 / FGSC 9935 / NRRL 34936) (Fusarium vascular wilt of tomato).